Consider the following 434-residue polypeptide: V-type ATP synthase beta chain (434 aa).

It belongs to the ATPase alpha/beta chains family.

Functionally, produces ATP from ADP in the presence of a proton gradient across the membrane. The V-type beta chain is a regulatory subunit. The chain is V-type ATP synthase beta chain from Borrelia garinii subsp. bavariensis (strain ATCC BAA-2496 / DSM 23469 / PBi) (Borreliella bavariensis).